A 192-amino-acid polypeptide reads, in one-letter code: Nucleoside triphosphate pyrophosphatase (192 aa).

Residue Asp73 is the Proton acceptor of the active site.

This sequence belongs to the Maf family. Requires a divalent metal cation as cofactor.

Its subcellular location is the cytoplasm. The enzyme catalyses a ribonucleoside 5'-triphosphate + H2O = a ribonucleoside 5'-phosphate + diphosphate + H(+). The catalysed reaction is a 2'-deoxyribonucleoside 5'-triphosphate + H2O = a 2'-deoxyribonucleoside 5'-phosphate + diphosphate + H(+). In terms of biological role, nucleoside triphosphate pyrophosphatase. May have a dual role in cell division arrest and in preventing the incorporation of modified nucleotides into cellular nucleic acids. The sequence is that of Nucleoside triphosphate pyrophosphatase from Ehrlichia chaffeensis (strain ATCC CRL-10679 / Arkansas).